Reading from the N-terminus, the 2191-residue chain is FRAS1-related extracellular matrix protein 1 (2191 aa).

Residues 1–29 (MHSPGCTGPKAQWFLLLQLLLLHLDRVSA) form the signal peptide. The Cell attachment site motif lies at 205–207 (RGD). CSPG repeat units follow at residues 300-394 (VPRA…MELE), 419-506 (APRV…FRIF), and 527-621 (PPFL…FVLW). An N-linked (GlcNAc...) asparagine glycan is attached at N341. N-linked (GlcNAc...) asparagine glycans are attached at residues N566 and N628. CSPG repeat units follow at residues 648-779 (KEAP…VSVS), 801-892 (QVPE…LEVT), and 912-1007 (EPPI…LVVS). N1039 carries N-linked (GlcNAc...) asparagine glycosylation. CSPG repeat units follow at residues 1049 to 1151 (PPSI…VYAT), 1172 to 1273 (EAPD…IQLS), 1294 to 1391 (TPTL…FYLW), 1412 to 1504 (GDIV…FTIS), 1525 to 1614 (LPVL…FLAT), and 1650 to 1742 (HLHS…FQAM). A glycan (N-linked (GlcNAc...) asparagine) is linked at N1180. N1584 is a glycosylation site (N-linked (GlcNAc...) asparagine). Residues 1749–1848 (ATPQSLDLRW…DDEVFEVILN (100 aa)) form the Calx-beta domain. A disordered region spans residues 1874-1921 (HPSNSFNQSKHSTWGKGPWHPLPSGSSSLTTSGSPLLERPPPSFTSGD). The segment covering 1875-1885 (PSNSFNQSKHS) has biased composition (polar residues). A compositionally biased stretch (low complexity) spans 1895–1910 (LPSGSSSLTTSGSPLL). Residues 2072 to 2186 (HSGYCHILVT…CSKGKAHNFV (115 aa)) enclose the C-type lectin domain. An intrachain disulfide couples C2163 to C2177.

The protein belongs to the FRAS1 family. Interacts with FREM2. In terms of tissue distribution, expressed in epidermis and hair follicles. Expressed in many developing epidermal appendages, including the whisker and sensory vibrissae, cranial and trunk hair follicles, meibomian glands, teeth, footpads, eyelash primordia and invaginating mammary glands. Limb expression localizes to sheets of dermal cells on the apical and basal surfaces of the digits but, unlike FRAS1, is excluded from the apical ectodermal ridge. Usually expressed at higher level in dermal cells underlying the differentiating epithelial components, especially underlying the epidermis of the head, limbs, and eyelids. Expression in the eyelid dermis is apparent as early as 13 dpc. Postnatal expression in the skin is limited to the dermal papillae. In the kidney, it is expressed from 12.5 dpc in the mesenchyme surrounding the branching ureteric tree, with a strong expression in the more proximal regions of these tubules rather than at the proliferating and branching ends of the ureteric buds. In hair follicle, it is selectively expressed in the vibrissal hair primordia during development. Preferentially expressed in the whisker pad epithelia of 12.5 dpc embryos, in both the epithelial and mesenchymal cells of developing hair follicles. In the early stages of hair follicle development (i.e. stages 0-1), it is expressed in both hair placodes and dermal condensations. In stage 2, it is detected in dermal condensations and adjacent epithelia, but not in the upper region of the hair follicles. Expressed at the tip of developing hair follicles in the later stages (i.e. stages 3-5).

Its subcellular location is the secreted. The protein resides in the extracellular space. It localises to the extracellular matrix. The protein localises to the basement membrane. In terms of biological role, extracellular matrix protein that plays a role in epidermal differentiation and is required for epidermal adhesion during embryonic development. The sequence is that of FRAS1-related extracellular matrix protein 1 (Frem1) from Mus musculus (Mouse).